A 237-amino-acid chain; its full sequence is Demethylmenaquinone methyltransferase (237 aa).

S-adenosyl-L-methionine contacts are provided by residues T58, D79, and 106–107 (NA).

The protein belongs to the class I-like SAM-binding methyltransferase superfamily. MenG/UbiE family.

It catalyses the reaction a 2-demethylmenaquinol + S-adenosyl-L-methionine = a menaquinol + S-adenosyl-L-homocysteine + H(+). The protein operates within quinol/quinone metabolism; menaquinone biosynthesis; menaquinol from 1,4-dihydroxy-2-naphthoate: step 2/2. Its function is as follows. Methyltransferase required for the conversion of demethylmenaquinol (DMKH2) to menaquinol (MKH2). This is Demethylmenaquinone methyltransferase from Bacillus anthracis (strain A0248).